A 178-amino-acid polypeptide reads, in one-letter code: FXYD domain-containing ion transport regulator 5 (178 aa).

Positions 1–21 (MSPPSQLCLLTIVALILPSEG) are cleaved as a signal peptide. Residues 21–126 (GQTPEKPRSS…YMPPSYIENP (106 aa)) are disordered. Residues 22–146 (QTPEKPRSSF…YDNTTLRKRG (125 aa)) lie on the Extracellular side of the membrane. Residues 29 to 58 (SSFTAHQSSVTTHVPVPDQTSPGVQTTPPI) are compositionally biased toward polar residues. Over residues 70-79 (QTAAKTKTQQ) the composition is skewed to low complexity. A helical membrane pass occupies residues 147–164 (LLVAAVLFITGIIILTSG). The Cytoplasmic segment spans residues 165 to 178 (KCRQFSQLCLNRHR).

This sequence belongs to the FXYD family. As to quaternary structure, regulatory subunit of the sodium/potassium-transporting ATPase which is composed of a catalytic alpha subunit, a non-catalytic beta subunit and an additional regulatory subunit. The regulatory subunit, a member of the FXYD protein family, modulates the enzymatic activity in a tissue- and isoform-specific way by changing affinities of the Na+/K+-ATPase toward Na(+), K(+) or ATP. Glycosylated. As to expression, spleen, lung, skeletal muscle, and testis.

It localises to the cell membrane. It is found in the basolateral cell membrane. Associates with and regulates the activity of the sodium/potassium-transporting ATPase (NKA) which catalyzes the hydrolysis of ATP coupled with the exchange of Na(+) and K(+) ions across the plasma membrane. May increase NKA activity by increasing the apparent affinity for Na(+). Involved in down-regulation of E-cadherin which results in reduced cell adhesion. Promotes metastasis. The polypeptide is FXYD domain-containing ion transport regulator 5 (Fxyd5) (Rattus norvegicus (Rat)).